Reading from the N-terminus, the 339-residue chain is Nucleoid-associated protein Asuc_0779 (339 aa).

Belongs to the YejK family.

It is found in the cytoplasm. It localises to the nucleoid. This chain is Nucleoid-associated protein Asuc_0779, found in Actinobacillus succinogenes (strain ATCC 55618 / DSM 22257 / CCUG 43843 / 130Z).